A 131-amino-acid polypeptide reads, in one-letter code: Ribosome-binding factor A (131 aa).

Belongs to the RbfA family. Monomer. Binds 30S ribosomal subunits, but not 50S ribosomal subunits or 70S ribosomes.

The protein resides in the cytoplasm. In terms of biological role, one of several proteins that assist in the late maturation steps of the functional core of the 30S ribosomal subunit. Associates with free 30S ribosomal subunits (but not with 30S subunits that are part of 70S ribosomes or polysomes). Required for efficient processing of 16S rRNA. May interact with the 5'-terminal helix region of 16S rRNA. The chain is Ribosome-binding factor A from Picosynechococcus sp. (strain ATCC 27264 / PCC 7002 / PR-6) (Agmenellum quadruplicatum).